The chain runs to 194 residues: Translation machinery-associated protein 22 (194 aa).

Residues 102–173 (VQIKRVERNK…DVQEWLLELY (72 aa)) enclose the SUI1 domain.

Belongs to the DENR family. In terms of assembly, interacts with the 40S ribosomal subunit.

It localises to the cytoplasm. The protein is Translation machinery-associated protein 22 (tma22) of Neosartorya fischeri (strain ATCC 1020 / DSM 3700 / CBS 544.65 / FGSC A1164 / JCM 1740 / NRRL 181 / WB 181) (Aspergillus fischerianus).